The sequence spans 759 residues: NADP-dependent malic enzyme (759 aa).

Residues 1-428 are malic enzyme; that stretch reads MDEQLKQSAL…KLTEFVYKTN (428 aa). The active-site Proton donor is tyrosine 39. The active-site Proton acceptor is lysine 94. Residues glutamate 136, aspartate 137, and aspartate 162 each contribute to the a divalent metal cation site. NADP(+)-binding positions include 195–198, asparagine 288, and asparagine 320; that span reads AGAA. Positions 429-759 are phosphate acetyltransferase; the sequence is LFMKPIFSQA…AVVEAQTTPL (331 aa).

This sequence in the N-terminal section; belongs to the malic enzymes family. In the C-terminal section; belongs to the phosphate acetyltransferase and butyryltransferase family. Mg(2+) serves as cofactor. Mn(2+) is required as a cofactor.

It catalyses the reaction (S)-malate + NADP(+) = pyruvate + CO2 + NADPH. The catalysed reaction is oxaloacetate + H(+) = pyruvate + CO2. This Salmonella typhimurium (strain LT2 / SGSC1412 / ATCC 700720) protein is NADP-dependent malic enzyme (maeB).